A 231-amino-acid chain; its full sequence is Floral homeotic protein PMADS 1 (231 aa).

Residues 3 to 58 (RGKIQIKRIENQTNRQVTYSKRRNGLFKKANELTVLCDAKVSIIMISSTGKLHEFI) form the MADS-box domain. In terms of domain architecture, K-box spans 84 to 174 (YEKMQEQLRK…LLEFDARQED (91 aa)).

In terms of tissue distribution, predominantly expressed in petals and stamens, less in carpels and sepals.

It is found in the nucleus. In terms of biological role, transcription factor involved in the genetic control of flower development. Necessary for the normal development of petals. Absence of the PMADS1 protein causes transformation of petals into sepals. The sequence is that of Floral homeotic protein PMADS 1 (PMADS1) from Petunia hybrida (Petunia).